The primary structure comprises 759 residues: TY1 enhancer activator (759 aa).

Residues 1–61 are disordered; that stretch reads MTAPLWPNKN…GTGANTLTNG (61 aa). A Phosphothreonine modification is found at threonine 22. Positions 30–51 are enriched in low complexity; the sequence is SSTNASSNEENSRSSSAANVRS. The segment at residues 70–96 is a DNA-binding region (zn(2)-C6 fungal-type); sequence CTNCRNRRKKCDLGFPCGNCSRLELVC. Residues 229 to 254 form a disordered region; sequence LTPQGEKKKKPLVKGSLYPEGPVSYK. Residues 744–752 carry the 9aaTAD motif; that stretch reads DDLIRELFG. Phosphothreonine is present on threonine 755.

It is found in the nucleus. Its function is as follows. TY1 element enhancer binding protein. Binds to the DNA sequence 5'-TCGGTGGTATTATTCCGA-3'. This is TY1 enhancer activator (TEA1) from Saccharomyces cerevisiae (strain ATCC 204508 / S288c) (Baker's yeast).